Reading from the N-terminus, the 279-residue chain is Thymidylate synthase (279 aa).

133–134 (RR) provides a ligand contact to dUMP. The active-site Nucleophile is the Cys154. Residues 178–181 (RSND), Asn189, and 219–221 (HIY) each bind dUMP. Asp181 provides a ligand contact to (6R)-5,10-methylene-5,6,7,8-tetrahydrofolate. A (6R)-5,10-methylene-5,6,7,8-tetrahydrofolate-binding site is contributed by Ala278.

It belongs to the thymidylate synthase family. Bacterial-type ThyA subfamily. As to quaternary structure, homodimer.

It localises to the cytoplasm. The catalysed reaction is dUMP + (6R)-5,10-methylene-5,6,7,8-tetrahydrofolate = 7,8-dihydrofolate + dTMP. Its pathway is pyrimidine metabolism; dTTP biosynthesis. Functionally, catalyzes the reductive methylation of 2'-deoxyuridine-5'-monophosphate (dUMP) to 2'-deoxythymidine-5'-monophosphate (dTMP) while utilizing 5,10-methylenetetrahydrofolate (mTHF) as the methyl donor and reductant in the reaction, yielding dihydrofolate (DHF) as a by-product. This enzymatic reaction provides an intracellular de novo source of dTMP, an essential precursor for DNA biosynthesis. The protein is Thymidylate synthase of Streptococcus suis (strain 05ZYH33).